A 404-amino-acid polypeptide reads, in one-letter code: uncharacterized protein (404 aa).

Over residues 262 to 278 (VSTGDTSPCGTEDSSPA) the composition is skewed to polar residues. Disordered regions lie at residues 262–307 (VSTG…SPSL) and 319–340 (MKKSHSANDSEEFFREDDSGAD). A phosphoserine mark is found at Ser268, Ser276, and Ser279. A phosphothreonine mark is found at Thr290 and Thr293. Phosphoserine is present on residues Ser304, Ser306, Ser324, Ser358, and Ser362. Positions 319–336 (MKKSHSANDSEEFFREDD) are enriched in basic and acidic residues.

This is an uncharacterized protein from Mus musculus (Mouse).